The chain runs to 382 residues: Sphingoid long-chain base transporter RSB1 (382 aa).

The Extracellular portion of the chain corresponds to 1-34 (MSNATNNTLGSLLPQLEAAANSNSLYGGMVPNLR). N-linked (GlcNAc...) asparagine glycans are attached at residues N3 and N6. The helical transmembrane segment at 35–55 (FNITMIVIWGILLTIHVVQLL) threads the bilayer. The Cytoplasmic segment spans residues 56–57 (MR). The helical transmembrane segment at 58–78 (QYWFSIAFICTGILEVLGYIG) threads the bilayer. The Extracellular segment spans residues 79–90 (RTWSHSNVADMD). A helical transmembrane segment spans residues 91-111 (AFLLNMICLTIAPVFTMGGIY). The Cytoplasmic segment spans residues 112 to 135 (YQLAKLIEVYGHRFSLLPSPMAYS). A helical membrane pass occupies residues 136–156 (FIFICSDIVSLVVQAVGGGLC). At 157–171 (GVAVTDGTSTTTGNH) the chain is on the extracellular side. Residues 172 to 192 (VFIAGLAIQVASMAIFLMLWF) traverse the membrane as a helical segment. Topologically, residues 193–241 (HFLFRIYISVRWEHINSRPISLSLLKISQTEVDYLYREKFHFLRLEPKR) are cytoplasmic. Residues 242 to 262 (WVFHYFNLAMTVAVLTIFTRC) form a helical membrane-spanning segment. The Extracellular segment spans residues 263–281 (CYRLAELVVGWDGYLITHE). Residues 282–302 (WYFIILDALMMAIATVTLTIF) traverse the membrane as a helical segment. Residues 303 to 382 (HPGFAFKGRS…LFSSKKKAKL (80 aa)) lie on the Cytoplasmic side of the membrane.

This sequence belongs to the lipid-translocating exporter (LTE) (TC 9.A.26.1) family.

It localises to the cell membrane. Catalyzes the ATP-dependent translocation of sphingoid long-chain bases (LCBs) from the cytoplasmic site toward the extracytoplasmic side of the membrane (flip-flop). Involved in the establishment of the functional lipid asymmetry of the plasma membrane. Regulates intracellular levels of LCBs, sphingolipid precursors that are growth inhibitory at increased levels. This Saccharomyces cerevisiae (strain Lalvin EC1118 / Prise de mousse) (Baker's yeast) protein is Sphingoid long-chain base transporter RSB1 (RSB1).